The following is a 455-amino-acid chain: Bifunctional protein GlmU (455 aa).

The pyrophosphorylase stretch occupies residues 1-226 (MSLDIVILAA…PMEVQGANDR (226 aa)). UDP-N-acetyl-alpha-D-glucosamine-binding positions include 8–11 (LAAG), lysine 22, glutamine 73, 78–79 (GT), 99–101 (YGD), glycine 136, glutamate 151, asparagine 166, and asparagine 224. Aspartate 101 lines the Mg(2+) pocket. Residue asparagine 224 coordinates Mg(2+). The segment at 227–247 (RQLSELERHYQLREGRRLMAQ) is linker. An N-acetyltransferase region spans residues 248-455 (GVTLRDPARF…WKRPEKIKKS (208 aa)). 2 residues coordinate UDP-N-acetyl-alpha-D-glucosamine: arginine 330 and lysine 348. The Proton acceptor role is filled by histidine 360. 2 residues coordinate UDP-N-acetyl-alpha-D-glucosamine: tyrosine 363 and asparagine 374. Residues alanine 377, 383 to 384 (NY), serine 402, alanine 420, and arginine 437 contribute to the acetyl-CoA site.

It in the N-terminal section; belongs to the N-acetylglucosamine-1-phosphate uridyltransferase family. This sequence in the C-terminal section; belongs to the transferase hexapeptide repeat family. Homotrimer. Mg(2+) is required as a cofactor.

The protein resides in the cytoplasm. The enzyme catalyses alpha-D-glucosamine 1-phosphate + acetyl-CoA = N-acetyl-alpha-D-glucosamine 1-phosphate + CoA + H(+). The catalysed reaction is N-acetyl-alpha-D-glucosamine 1-phosphate + UTP + H(+) = UDP-N-acetyl-alpha-D-glucosamine + diphosphate. Its pathway is nucleotide-sugar biosynthesis; UDP-N-acetyl-alpha-D-glucosamine biosynthesis; N-acetyl-alpha-D-glucosamine 1-phosphate from alpha-D-glucosamine 6-phosphate (route II): step 2/2. It participates in nucleotide-sugar biosynthesis; UDP-N-acetyl-alpha-D-glucosamine biosynthesis; UDP-N-acetyl-alpha-D-glucosamine from N-acetyl-alpha-D-glucosamine 1-phosphate: step 1/1. The protein operates within bacterial outer membrane biogenesis; LPS lipid A biosynthesis. Catalyzes the last two sequential reactions in the de novo biosynthetic pathway for UDP-N-acetylglucosamine (UDP-GlcNAc). The C-terminal domain catalyzes the transfer of acetyl group from acetyl coenzyme A to glucosamine-1-phosphate (GlcN-1-P) to produce N-acetylglucosamine-1-phosphate (GlcNAc-1-P), which is converted into UDP-GlcNAc by the transfer of uridine 5-monophosphate (from uridine 5-triphosphate), a reaction catalyzed by the N-terminal domain. This is Bifunctional protein GlmU from Pseudomonas entomophila (strain L48).